Here is a 246-residue protein sequence, read N- to C-terminus: Carboxy-S-adenosyl-L-methionine synthase (246 aa).

Residues tyrosine 39, 64 to 66 (GCS), 89 to 90 (DN), 121 to 122 (DI), asparagine 136, and arginine 203 contribute to the S-adenosyl-L-methionine site.

This sequence belongs to the class I-like SAM-binding methyltransferase superfamily. Cx-SAM synthase family. As to quaternary structure, homodimer.

It catalyses the reaction prephenate + S-adenosyl-L-methionine = carboxy-S-adenosyl-L-methionine + 3-phenylpyruvate + H2O. Its function is as follows. Catalyzes the conversion of S-adenosyl-L-methionine (SAM) to carboxy-S-adenosyl-L-methionine (Cx-SAM). In Pseudomonas aeruginosa (strain UCBPP-PA14), this protein is Carboxy-S-adenosyl-L-methionine synthase.